Reading from the N-terminus, the 166-residue chain is Interferon gamma (166 aa).

A signal peptide spans 1 to 23 (MNYTTICLAFQLCVIFCSSGYYC). A Pyrrolidone carboxylic acid modification is found at Q24. N-linked (GlcNAc...) asparagine glycans are attached at residues N39, N106, and N107.

The protein belongs to the type II (or gamma) interferon family. Homodimer. Interacts with IFNGR1 (via extracellular domain); this interaction promotes IFNGR1 dimerization.

The protein localises to the secreted. Its function is as follows. Type II interferon produced by immune cells such as T-cells and NK cells that plays crucial roles in antimicrobial, antiviral, and antitumor responses by activating effector immune cells and enhancing antigen presentation. Primarily signals through the JAK-STAT pathway after interaction with its receptor IFNGR1 to affect gene regulation. Upon IFNG binding, IFNGR1 intracellular domain opens out to allow association of downstream signaling components JAK2, JAK1 and STAT1, leading to STAT1 activation, nuclear translocation and transcription of IFNG-regulated genes. Many of the induced genes are transcription factors such as IRF1 that are able to further drive regulation of a next wave of transcription. Plays a role in class I antigen presentation pathway by inducing a replacement of catalytic proteasome subunits with immunoproteasome subunits. In turn, increases the quantity, quality, and repertoire of peptides for class I MHC loading. Increases the efficiency of peptide generation also by inducing the expression of activator PA28 that associates with the proteasome and alters its proteolytic cleavage preference. Up-regulates as well MHC II complexes on the cell surface by promoting expression of several key molecules such as cathepsins B/CTSB, H/CTSH, and L/CTSL. Participates in the regulation of hematopoietic stem cells during development and under homeostatic conditions by affecting their development, quiescence, and differentiation. This chain is Interferon gamma (IFNG), found in Mustela putorius furo (European domestic ferret).